A 262-amino-acid chain; its full sequence is Sulfite reductase, dissimilatory-type subunit beta (262 aa).

The [4Fe-4S] cluster site is built by cysteine 151, cysteine 188, cysteine 189, cysteine 193, cysteine 231, cysteine 258, and cysteine 261. Cysteine 193 is a siroheme binding site.

Heterohexamer of two alpha, two beta and two gamma subunits. It depends on [4Fe-4S] cluster as a cofactor. Siroheme is required as a cofactor.

It carries out the reaction [DsrC protein]-trisulfide + NAD(+) + 3 H2O = [DsrC protein]-dithiol + sulfite + NADH + 3 H(+). Its function is as follows. Catalyzes the reduction of sulfite to sulfide. This is the terminal oxidation reaction in sulfate respiration, a process catalyzed by the sulfate-reducing bacteria. The polypeptide is Sulfite reductase, dissimilatory-type subunit beta (dsrB) (Megalodesulfovibrio gigas (strain ATCC 19364 / DSM 1382 / NCIMB 9332 / VKM B-1759) (Desulfovibrio gigas)).